The primary structure comprises 565 residues: Alkaline nuclease (565 aa).

Belongs to the herpesviridae alkaline nuclease family. As to quaternary structure, interacts with major DNA-binding protein; this interaction increases the nuclease processivity of the alkaline exonuclease.

The protein localises to the host nucleus. Its subcellular location is the host cytoplasm. Its function is as follows. Plays a role in processing non linear or branched viral DNA intermediates in order to promote the production of mature packaged unit-length linear progeny viral DNA molecules. Exhibits endonuclease and exonuclease activities and accepts both double-stranded and single-stranded DNA as substrate. Exonuclease digestion of DNA is in the 5'-&gt; 3' direction and the products are 5'-monophosphate nucleosides. Additionally, forms a recombinase with the major DNA-binding protein, which displays strand exchange activity. The chain is Alkaline nuclease from Equine herpesvirus 1 (strain V592) (EHV-1).